The following is a 419-amino-acid chain: Protein FAM217A (419 aa).

Disordered regions lie at residues 1–23, 100–119, 234–298, and 362–388; these read MGRKSNESCSANPHSSSISQENL, DKRNSSVEENVTDESDLSES, PSSS…SRSL, and PIPLSFPENPREEVKVPRTKKKCHRKS. A compositionally biased stretch (polar residues) spans 7 to 23; that stretch reads ESCSANPHSSSISQENL. Residues 284 to 298 are compositionally biased toward polar residues; it reads SLSTAGKSKSNSRSL. The span at 378-388 shows a compositional bias: basic residues; that stretch reads PRTKKKCHRKS.

It belongs to the FAM217 family.

The protein is Protein FAM217A (Fam217a) of Rattus norvegicus (Rat).